Here is a 718-residue protein sequence, read N- to C-terminus: 1-deoxy-D-xylulose-5-phosphate synthase 1, chloroplastic (718 aa).

A chloroplast-targeting transit peptide spans 1-55 (MAFCALSFPAHISRATTPAPSDLQKSSSFSSRFYWGADLLRPSQYKVRKIQSGVY). Residues H143 and 184–186 (GHS) contribute to the thiamine diphosphate site. D215 is a binding site for Mg(2+). Thiamine diphosphate is bound by residues 216–217 (GA), N244, Y365, and E447. Residue N244 coordinates Mg(2+).

The protein belongs to the transketolase family. DXPS subfamily. Homodimer. The cofactor is Mg(2+). Thiamine diphosphate is required as a cofactor. In terms of tissue distribution, expressed in trichomes, leaves, flowers, roots and stems.

It localises to the plastid. It is found in the chloroplast. The enzyme catalyses D-glyceraldehyde 3-phosphate + pyruvate + H(+) = 1-deoxy-D-xylulose 5-phosphate + CO2. It participates in metabolic intermediate biosynthesis; 1-deoxy-D-xylulose 5-phosphate biosynthesis; 1-deoxy-D-xylulose 5-phosphate from D-glyceraldehyde 3-phosphate and pyruvate: step 1/1. In terms of biological role, catalyzes the acyloin condensation reaction between C atoms 2 and 3 of pyruvate and glyceraldehyde 3-phosphate to yield 1-deoxy-D-xylulose-5-phosphate (DXP). The chain is 1-deoxy-D-xylulose-5-phosphate synthase 1, chloroplastic from Cannabis sativa (Hemp).